The primary structure comprises 537 residues: MKGSISYQIYKGALLLSALLNSVSAQQVGTLTAETHPALTWSKCTAGXCSQVSGSVVIDANWPXVHSTSGSTNCYTGNTWDATLCPDDVTCAANCAVDGARRQHLRVTTSGNSLRINFVTTASQKNIGSRLYLLENDTTYQKFNLLNQEFTFDVDVSNLPCGLNGALYFVDMDADGGMAKYPTNKAGAKYGTGYCDSQCPRDLKFINGQANVDGWTPSKNDVNSGIGNHGSCCAEMDIWEANSISNAVTPHPCDTPSQTMCTGQRCGGTYSTDRYGGTCDPDGCDFNPYRMGVTNFYGPGETIDTKSPFTVVTQFLTNDGTSTGTLSEIKRFYVQGGKVIGNPQSTIVGVSGNSITDSWCNAQKSAFGDTNEFSKHGGMAGMGAGLADGMVLVMSLWDDHASDMLWLDSTYPTNATSTTPGAKRGTCDISRRPNTVESTYPNAYVIYSNIKTGPLNSTFTGGTTSSSSTTTTTSKSTSTSSSSKTTTTVTTTTTSSGSSGTGARDWAQCGGNGWTGPTTCVSPYTCTKQNDWYSQCL.

The N-terminal stretch at 1–18 (MKGSISYQIYKGALLLSA) is a signal peptide. The interval 19 to 453 (LLNSVSAQQV…YVIYSNIKTG (435 aa)) is catalytic. An N-linked (GlcNAc...) asparagine glycan is attached at Asn136. Glu235 functions as the Nucleophile in the catalytic mechanism. Glu240 serves as the catalytic Proton donor. N-linked (GlcNAc...) asparagine glycans are attached at residues Asn414 and Asn456. The tract at residues 454–477 (PLNSTFTGGTTSSSSTTTTTSKST) is linker. The segment covering 458–502 (TFTGGTTSSSSTTTTTSKSTSTSSSSKTTTTVTTTTTSSGSSGTG) has biased composition (low complexity). Residues 458–503 (TFTGGTTSSSSTTTTTSKSTSTSSSSKTTTTVTTTTTSSGSSGTGA) form a disordered region. The CBM1 domain maps to 501–537 (TGARDWAQCGGNGWTGPTTCVSPYTCTKQNDWYSQCL). Intrachain disulfides connect Cys509/Cys526 and Cys520/Cys536.

This sequence belongs to the glycosyl hydrolase 7 (cellulase C) family.

Its subcellular location is the secreted. The enzyme catalyses Hydrolysis of (1-&gt;4)-beta-D-glucosidic linkages in cellulose and cellotetraose, releasing cellobiose from the non-reducing ends of the chains.. The sequence is that of Exoglucanase 1 (cbh1) from Penicillium janthinellum (Penicillium vitale).